We begin with the raw amino-acid sequence, 95 residues long: Aspartyl/glutamyl-tRNA(Asn/Gln) amidotransferase subunit C (95 aa).

This sequence belongs to the GatC family. As to quaternary structure, heterotrimer of A, B and C subunits.

The enzyme catalyses L-glutamyl-tRNA(Gln) + L-glutamine + ATP + H2O = L-glutaminyl-tRNA(Gln) + L-glutamate + ADP + phosphate + H(+). It carries out the reaction L-aspartyl-tRNA(Asn) + L-glutamine + ATP + H2O = L-asparaginyl-tRNA(Asn) + L-glutamate + ADP + phosphate + 2 H(+). In terms of biological role, allows the formation of correctly charged Asn-tRNA(Asn) or Gln-tRNA(Gln) through the transamidation of misacylated Asp-tRNA(Asn) or Glu-tRNA(Gln) in organisms which lack either or both of asparaginyl-tRNA or glutaminyl-tRNA synthetases. The reaction takes place in the presence of glutamine and ATP through an activated phospho-Asp-tRNA(Asn) or phospho-Glu-tRNA(Gln). This chain is Aspartyl/glutamyl-tRNA(Asn/Gln) amidotransferase subunit C, found in Nitrobacter hamburgensis (strain DSM 10229 / NCIMB 13809 / X14).